A 195-amino-acid chain; its full sequence is Adenylate kinase (195 aa).

8 to 16 provides a ligand contact to ATP; sequence GIPGVGKTT.

Belongs to the archaeal adenylate kinase family.

The protein resides in the cytoplasm. The catalysed reaction is AMP + ATP = 2 ADP. This is Adenylate kinase from Saccharolobus islandicus (strain M.14.25 / Kamchatka #1) (Sulfolobus islandicus).